Here is a 103-residue protein sequence, read N- to C-terminus: Histone H4 (103 aa).

Positions 1–32 (MNTQSIGAKGKSKAAKGIAKRHRKQSSLSDSI) are disordered. The segment covering 10-25 (GKSKAAKGIAKRHRKQ) has biased composition (basic residues). K16 carries the N6-acetyl-N6-methyllysine; alternate modification. N6-methyllysine; alternate is present on K16. The DNA-binding element occupies 20–24 (KRHRK). N6-glutaryllysine is present on K94.

This sequence belongs to the histone H4 family. The nucleosome is a histone octamer containing two molecules each of H2A, H2B, H3 and H4 assembled in one H3-H4 heterotetramer and two H2A-H2B heterodimers. The octamer wraps approximately 147 bp of DNA. Post-translationally, glutarylation at Lys-94 (H4K91glu) destabilizes nucleosomes by promoting dissociation of the H2A-H2B dimers from nucleosomes.

It is found in the nucleus. Its subcellular location is the chromosome. Functionally, core component of nucleosome. Nucleosomes wrap and compact DNA into chromatin, limiting DNA accessibility to the cellular machineries which require DNA as a template. Histones thereby play a central role in transcription regulation, DNA repair, DNA replication and chromosomal stability. DNA accessibility is regulated via a complex set of post-translational modifications of histones, also called histone code, and nucleosome remodeling. The sequence is that of Histone H4 (HHF1) from Encephalitozoon cuniculi (strain GB-M1) (Microsporidian parasite).